The following is a 943-amino-acid chain: Isoleucine--tRNA ligase (943 aa).

A 'HIGH' region motif is present at residues Pro-58–His-68. Glu-567 provides a ligand contact to L-isoleucyl-5'-AMP. The 'KMSKS' region signature appears at Lys-608–Ser-612. An ATP-binding site is contributed by Lys-611. Zn(2+) is bound by residues Cys-906, Cys-909, Cys-926, and Cys-929.

The protein belongs to the class-I aminoacyl-tRNA synthetase family. IleS type 1 subfamily. As to quaternary structure, monomer. Zn(2+) is required as a cofactor.

Its subcellular location is the cytoplasm. It catalyses the reaction tRNA(Ile) + L-isoleucine + ATP = L-isoleucyl-tRNA(Ile) + AMP + diphosphate. Its function is as follows. Catalyzes the attachment of isoleucine to tRNA(Ile). As IleRS can inadvertently accommodate and process structurally similar amino acids such as valine, to avoid such errors it has two additional distinct tRNA(Ile)-dependent editing activities. One activity is designated as 'pretransfer' editing and involves the hydrolysis of activated Val-AMP. The other activity is designated 'posttransfer' editing and involves deacylation of mischarged Val-tRNA(Ile). This chain is Isoleucine--tRNA ligase, found in Pseudomonas putida (strain W619).